The sequence spans 527 residues: MQLQKPLKIGLGMMGAGLFGIIFGWVLFPVILKSQLKKEMALSKKTDVRAMWEKIPFALDFKVYMFNYTNVEEIMKGAAPIVKEIGPFHFDEWKEKVDIEDHDEDDTITYKKRDYFYFRPDKSGPGLTGEEVVVMPHLLMLSMATIVNNEKPAMLNMLGKAFNGIFDEPKDIFIRVKVLDLLFRGIIINCARTEFAPKAVCTALKKEGATGMTFEPNNQFRFSLFGMRNGTIDPHVVTVRRGIKNVMDVGKVIAIDGKTEQDVWRDKCNEFEGTDGTVFPPFLTEKDNLESFSDDLCRSFKPWYQKKTSYRGIKTNRYVANIGDFANDPELQCYCDSPDKCPPKGLMDLMKCMKAPMYASLPHYLDSDPQLLKDVKGLSPDANEHGIEIDFEPISGTPMVAKQRVQFNIILLKTDKMDLIKDLPGTMTPLFWIEEGLALNKTFVKMLKNQLFIPKRIVSVVKWLLAGVGFVGLVGSLVYQFKGKMINFALSPSSAQVTKVNPEINQQNQPKDISIIGESQNPPKVDM.

The Cytoplasmic segment spans residues 1–10 (MQLQKPLKIG). A helical transmembrane segment spans residues 11–31 (LGMMGAGLFGIIFGWVLFPVI). Residues 32-456 (LKSQLKKEMA…LKNQLFIPKR (425 aa)) are Extracellular-facing. Asn-67 and Asn-229 each carry an N-linked (GlcNAc...) asparagine glycan. Intrachain disulfides connect Cys-268–Cys-333, Cys-297–Cys-352, and Cys-335–Cys-341. N-linked (GlcNAc...) asparagine glycosylation occurs at Asn-440. A helical membrane pass occupies residues 457–477 (IVSVVKWLLAGVGFVGLVGSL). The Cytoplasmic segment spans residues 478-527 (VYQFKGKMINFALSPSSAQVTKVNPEINQQNQPKDISIIGESQNPPKVDM).

It belongs to the CD36 family. In terms of tissue distribution, detected in both male and female antennal tissues. Expression is two to three fold higher in male compared to female antenna.

It is found in the cell membrane. In terms of biological role, plays an olfactory role that is not restricted to pheromone sensitivity. The sequence is that of Sensory neuron membrane protein 1 from Ostrinia furnacalis (Asian corn borer).